Here is a 178-residue protein sequence, read N- to C-terminus: MGATKKPDLNDPVLRAKLAKGMGHNYYGEPAWPNDLSYIFPVVILGTIACTIGLAVLEPSMIGEPANPFATPLEILPEWYLFPVFQILRTVPNKLLGVLLMASVPAGSLTVPFLENVNQFQNPFRRPVATTVSLIGTAVALWLGIGAALPIDESLTLGLFQFDPTVEYKNLSIFYSYI.

A run of 3 helical transmembrane segments spans residues 36 to 56 (LSYIFPVVILGTIACTIGLAV), 95 to 115 (LLGVLLMASVPAGSLTVPFLE), and 131 to 151 (TVSLIGTAVALWLGIGAALPI).

It belongs to the cytochrome b family. PetD subfamily. As to quaternary structure, the 4 large subunits of the cytochrome b6-f complex are cytochrome b6, subunit IV (17 kDa polypeptide, petD), cytochrome f and the Rieske protein, while the 4 small subunits are petG, petL, petM and petN. The complex functions as a dimer.

It is found in the plastid. The protein localises to the chloroplast thylakoid membrane. Its function is as follows. Component of the cytochrome b6-f complex, which mediates electron transfer between photosystem II (PSII) and photosystem I (PSI), cyclic electron flow around PSI, and state transitions. This chain is Cytochrome b6-f complex subunit 4, found in Picea abies (Norway spruce).